Consider the following 320-residue polypeptide: UDP-3-O-acyl-N-acetylglucosamine deacetylase (320 aa).

Zn(2+) is bound by residues His92, His251, and Asp255. His278 serves as the catalytic Proton donor.

Belongs to the LpxC family. Zn(2+) is required as a cofactor.

The enzyme catalyses a UDP-3-O-[(3R)-3-hydroxyacyl]-N-acetyl-alpha-D-glucosamine + H2O = a UDP-3-O-[(3R)-3-hydroxyacyl]-alpha-D-glucosamine + acetate. The protein operates within glycolipid biosynthesis; lipid IV(A) biosynthesis; lipid IV(A) from (3R)-3-hydroxytetradecanoyl-[acyl-carrier-protein] and UDP-N-acetyl-alpha-D-glucosamine: step 2/6. Functionally, catalyzes the hydrolysis of UDP-3-O-myristoyl-N-acetylglucosamine to form UDP-3-O-myristoylglucosamine and acetate, the committed step in lipid A biosynthesis. This is UDP-3-O-acyl-N-acetylglucosamine deacetylase from Psychrobacter arcticus (strain DSM 17307 / VKM B-2377 / 273-4).